The primary structure comprises 255 residues: Biotin carboxyl carrier protein of acetyl-CoA carboxylase 2, chloroplastic (255 aa).

Residues 1–87 (MASLSVPCVK…TNVPEPAELS (87 aa)) constitute a chloroplast transit peptide. The tract at residues 148 to 193 (PPAQPVALPPSPTPTSTPATAKPTSAPSSSHPPLKSPMAGTFYRSP) is disordered. Residues 149–162 (PAQPVALPPSPTPT) are compositionally biased toward pro residues. Low complexity predominate over residues 163–180 (STPATAKPTSAPSSSHPP). The 77-residue stretch at 178 to 254 (HPPLKSPMAG…SVDTPLFVIA (77 aa)) folds into the Biotinyl-binding domain. Position 220 is an N6-biotinyllysine (Lys-220).

As to quaternary structure, acetyl-CoA carboxylase is a heterohexamer composed of biotin carboxyl carrier protein, biotin carboxylase and 2 subunits each of ACCase subunit alpha and ACCase plastid-coded subunit beta (accD). Primarily expressed in 7 to 10 days after flowering seeds at levels approximately 2-fold less abundant than BCCP1.

Its subcellular location is the plastid. The protein resides in the chloroplast. It functions in the pathway lipid metabolism; fatty acid biosynthesis. Its function is as follows. This protein is a component of the acetyl coenzyme A carboxylase complex; first, biotin carboxylase catalyzes the carboxylation of the carrier protein and then the transcarboxylase transfers the carboxyl group to form malonyl-CoA. The polypeptide is Biotin carboxyl carrier protein of acetyl-CoA carboxylase 2, chloroplastic (BCCP2) (Arabidopsis thaliana (Mouse-ear cress)).